Consider the following 288-residue polypeptide: ATP synthase gamma chain (288 aa).

It belongs to the ATPase gamma chain family. F-type ATPases have 2 components, CF(1) - the catalytic core - and CF(0) - the membrane proton channel. CF(1) has five subunits: alpha(3), beta(3), gamma(1), delta(1), epsilon(1). CF(0) has three main subunits: a, b and c.

It is found in the cell inner membrane. Functionally, produces ATP from ADP in the presence of a proton gradient across the membrane. The gamma chain is believed to be important in regulating ATPase activity and the flow of protons through the CF(0) complex. The sequence is that of ATP synthase gamma chain from Haemophilus ducreyi (strain 35000HP / ATCC 700724).